A 468-amino-acid polypeptide reads, in one-letter code: 6-phospho-beta-galactosidase (468 aa).

The D-galactose 6-phosphate site is built by Gln-19, His-116, Asn-159, Glu-160, and Asn-297. Glu-160 functions as the Proton donor in the catalytic mechanism. Glu-375 functions as the Nucleophile in the catalytic mechanism. D-galactose 6-phosphate contacts are provided by Ser-428, Trp-429, Lys-435, and Tyr-437.

It belongs to the glycosyl hydrolase 1 family.

The enzyme catalyses a 6-phospho-beta-D-galactoside + H2O = D-galactose 6-phosphate + an alcohol. The protein operates within carbohydrate metabolism; lactose degradation; D-galactose 6-phosphate and beta-D-glucose from lactose 6-phosphate: step 1/1. The sequence is that of 6-phospho-beta-galactosidase from Streptococcus sanguinis (strain SK36).